Reading from the N-terminus, the 138-residue chain is ATP synthase subunit g, mitochondrial (138 aa).

This sequence belongs to the ATPase g subunit family. As to quaternary structure, F-type ATP synthases have 2 components, the catalytic core F(1) and the membrane-embedded component F(0), linked together by a central stalk and a peripheral stalk. The central stalk, also called rotor shaft, is often seen as part of F(1). The peripheral stalk is seen as part of F(0). F(0) contains the membrane channel next to the rotor. F-type ATP synthases form dimers but each monomer functions independently in ATP generation. The dimer consists of 17 different polypeptides: ATP1 (subunit alpha, 3 molecules per monomer, part of F(1)), ATP2 (subunit beta, 3 copies per monomer, part of F(1)), ATP3 (subunit gamma, part of the central stalk), ATP4 (subunit b, part of the peripheral stalk), ATP5/OSCP (subunit 5/OSCP, part of the peripheral stalk), ATP6 (subunit a, part of the peripheral stalk), ATP7 (subunit d, part of the peripheral stalk), ATP8 (subunit 8, part of the peripheral stalk), OLI1 (subunit c, part of the rotor, 10 molecules per monomer), ATP14 (subunit h, part of the peripheral stalk), ATP15 (subunit epsilon, part of the central stalk), ATP16 (subunit delta, part of the central stalk), ATP17 (subunit f, part of the peripheral stalk), ATP18 (subunit i/j, part of the peripheral stalk), ATP19 (subunit k, dimer-specific, at interface between monomers), ATP20 (subunit g, at interface between monomers), TIM11 (subunit e, at interface between monomers).

The protein localises to the mitochondrion inner membrane. Mitochondrial membrane ATP synthase (F(1)F(0) ATP synthase or Complex V) produces ATP from ADP in the presence of a proton gradient across the membrane which is generated by electron transport complexes of the respiratory chain. F-type ATP synthases consist of two structural domains, F(1) - containing the extramembraneous catalytic core, and F(0) - containing the membrane proton channel, linked together by a central stalk and a peripheral stalk. During catalysis, ATP synthesis in the catalytic domain of F(1) is coupled via a rotary mechanism of the central stalk subunits to proton translocation. Part of the complex F(0) domain. Minor subunit located with subunit a/ATP6 in the membrane. Together with subunit e/TIM11, probably contributes to membrane curvature at the site of the ATP synthase dimer, ultimately contributing to formation of cristae. The protein is ATP synthase subunit g, mitochondrial of Yarrowia lipolytica (strain CLIB 122 / E 150) (Yeast).